The sequence spans 362 residues: Very-long-chain (3R)-3-hydroxyacyl-CoA dehydratase 3 (362 aa).

M1 is modified (N-acetylmethionine). Residues 1-149 are Cytoplasmic-facing; sequence METQVLTPHV…ETLTNLKKGY (149 aa). Positions 5 to 94 constitute a CS domain; the sequence is VLTPHVYWAQ…KGSHWWERLT (90 aa). A Phosphothreonine modification is found at T7. The stretch at 111-138 forms a coiled coil; it reads LDESDAEMELRAKEEERLNKLRLEREGS. The residue at position 114 (S114) is a Phosphoserine. The helical transmembrane segment at 150–170 threads the bilayer; that stretch reads LFMYNLVQLLGFSWIFVNLTV. At 171–189 the chain is on the lumenal side; it reads RFFILGKESFYDTFHNVAD. The chain crosses the membrane as a helical span at residues 190–210; the sequence is MMYFCQMLALVETLNAAIGVT. The Cytoplasmic segment spans residues 211 to 212; it reads ST. Residues 213-233 traverse the membrane as a helical segment; sequence PVLPALIQFLGRNFILFLVFG. Topologically, residues 234–242 are lumenal; sequence TMEEMQNKA. A helical transmembrane segment spans residues 243–263; sequence VVFFVFYSWSAIEIFRYPFYM. At 264–280 the chain is on the cytoplasmic side; sequence LSCIDMDWKVLTWLRYT. The chain crosses the membrane as a helical span at residues 281-301; sequence MWIPLYPLGCLSEAVAVIQSI. Active-site residues include Y286 and E293. The Lumenal segment spans residues 302–322; the sequence is PVFNESGRFSFTLPYPVKMKV. The helical transmembrane segment at 323–343 threads the bilayer; the sequence is RFSFFLQVYLVMLFLGLYINF. Over 344-362 the chain is Cytoplasmic; that stretch reads RHLYKQRRRRYGQKKKKLH.

This sequence belongs to the very long-chain fatty acids dehydratase HACD family. In terms of assembly, may interact with enzymes of the ELO family (including ELOVL1); with those enzymes that mediate condensation, the first of the four steps of the reaction cycle responsible for fatty acids elongation, may be part of a larger fatty acids elongase complex. Interacts with RAC1. Associates with internalized insulin receptor/INSR complexes on Golgi/endosomal membranes; HACD3/PTPLAD1 together with ATIC and PRKAA2/AMPK2 is proposed to be part of a signaling network regulating INSR autophosphorylation and endocytosis.

The protein localises to the endoplasmic reticulum membrane. It carries out the reaction a very-long-chain (3R)-3-hydroxyacyl-CoA = a very-long-chain (2E)-enoyl-CoA + H2O. The catalysed reaction is (3R)-hydroxyhexadecanoyl-CoA = (2E)-hexadecenoyl-CoA + H2O. It functions in the pathway lipid metabolism; fatty acid biosynthesis. In terms of biological role, catalyzes the third of the four reactions of the long-chain fatty acids elongation cycle. This endoplasmic reticulum-bound enzymatic process, allows the addition of two carbons to the chain of long- and very long-chain fatty acids/VLCFAs per cycle. This enzyme catalyzes the dehydration of the 3-hydroxyacyl-CoA intermediate into trans-2,3-enoyl-CoA, within each cycle of fatty acid elongation. Thereby, it participates in the production of VLCFAs of different chain lengths that are involved in multiple biological processes as precursors of membrane lipids and lipid mediators. Involved in Rac1-signaling pathways leading to the modulation of gene expression. Promotes insulin receptor/INSR autophosphorylation and is involved in INSR internalization. The protein is Very-long-chain (3R)-3-hydroxyacyl-CoA dehydratase 3 of Mus musculus (Mouse).